Here is a 227-residue protein sequence, read N- to C-terminus: Ion-translocating oxidoreductase complex subunit E (227 aa).

The next 5 helical transmembrane spans lie at 34–56, 68–88, 91–111, 127–147, and 181–201; these read AINA…TIIS, IPIY…LLHA, FNLY…CIIV, FFDG…VGSI, and TIIL…LIAI.

The protein belongs to the NqrDE/RnfAE family. The complex is composed of six subunits: RnfA, RnfB, RnfC, RnfD, RnfE and RnfG.

Its subcellular location is the cell inner membrane. Functionally, part of a membrane-bound complex that couples electron transfer with translocation of ions across the membrane. The polypeptide is Ion-translocating oxidoreductase complex subunit E (Buchnera aphidicola subsp. Acyrthosiphon pisum (strain APS) (Acyrthosiphon pisum symbiotic bacterium)).